Reading from the N-terminus, the 241-residue chain is Chaperone protein HifB (241 aa).

Residues 1 to 27 form the signal peptide; that stretch reads MGKTMFKKTLLFFTALFFAALCAFSAN.

It belongs to the periplasmic pilus chaperone family.

The protein resides in the periplasm. Its function is as follows. Mediates assembly of pili by forming soluble multimeric complexes with pili subunits as an intermediate step in the assembly process. This protein is involved in type B pili (HifA) assembly. In Haemophilus influenzae, this protein is Chaperone protein HifB (hifB).